The chain runs to 255 residues: MSFTVIIPARYSSTRLPHKPLLDIAGKPMIQHVWEKAQQSGATRVIVATDHPEIEQVVTRFGGEVCLTSDKHNSGTERLAEVIEKMAIADDEIIVNIQGDEPLIPPLIVAQVAENLDKHQVNMATLAVKLTTREELFNPNVVKTLTDKNGMALYFSRATIPFGRDYFPQCDDAFVQQQNYLRHIGIYAYRAGFVKQYVAWEPTALEQLESLEQLRALWYGEKIHLDLAKEAPQVGVDTAEDLERVRQILNILCSQ.

It belongs to the KdsB family.

The protein localises to the cytoplasm. It carries out the reaction 3-deoxy-alpha-D-manno-oct-2-ulosonate + CTP = CMP-3-deoxy-beta-D-manno-octulosonate + diphosphate. Its pathway is nucleotide-sugar biosynthesis; CMP-3-deoxy-D-manno-octulosonate biosynthesis; CMP-3-deoxy-D-manno-octulosonate from 3-deoxy-D-manno-octulosonate and CTP: step 1/1. It participates in bacterial outer membrane biogenesis; lipopolysaccharide biosynthesis. Activates KDO (a required 8-carbon sugar) for incorporation into bacterial lipopolysaccharide in Gram-negative bacteria. In Glaesserella parasuis serovar 5 (strain SH0165) (Haemophilus parasuis), this protein is 3-deoxy-manno-octulosonate cytidylyltransferase.